The sequence spans 648 residues: MPQNCIAPRPEEDGGVMVQGLPDMSDTQSKSVLAFPTITSQPGLQMSMYPITLKFEEVVYKVKIEQTSQCMGSWKSKEKTILNGITGMVCPGEFLAMLGPSGSGKTTLLSALGGRLSKTFSGKVMYNGQPFSGCIKRRTGFVAQDDVLYPHLTVWETLFFTALLRLPSSLTRDEKAEHVDRVIAELGLNRCTNSMIGGPLFRGISGGEKKRVSIGQEMLINPSLLLLDEPTSGLDSTTAHRIVTTIKRLASGGRTVVTTIHQPSSRIYHMFDKVVLLSEGSPIYYGAASSAVEYFSSLGFSTSLTVNPADLLLDLANGIPPDTQKETSEQEQKTVKETLVSAYEKNISTKLKAELCNAESHSYEYTKAAAKNLKSEQWCTTWWYQFTVLLQRGVRERRFESFNKLRIFQVISVAFLGGLLWWHTPKSHIQDRTALLFFFSVFWGFYPLYNAVFTFPQEKRMLIKERSSGMYRLSSYFMARNVGDLPLELALPTAFVFIIYWMGGLKPDPTTFILSLLVVLYSVLVAQGLGLAFGALLMNIKQATTLASVTTLVFLIAGGYYVQQIPPFIVWLKYLSYSYYCYKLLLGIQYTDDDYYECSKGVWCRVGDFPAIKSMGLNNLWIDVFVMGVMLVGYRLMAYMALHRVKLR.

Residues 53 to 304 (LKFEEVVYKV…FSSLGFSTSL (252 aa)) enclose the ABC transporter domain. 99 to 106 (GPSGSGKT) lines the ATP pocket. Asparagine 346 carries N-linked (GlcNAc...) asparagine glycosylation. An ABC transmembrane type-2 domain is found at 384 to 590 (YQFTVLLQRG…CYKLLLGIQY (207 aa)). Transmembrane regions (helical) follow at residues 405 to 425 (LRIF…WHTP), 435 to 455 (LLFF…VFTF), 485 to 505 (LPLE…MGGL), 512 to 532 (FILS…LGLA), 543 to 562 (ATTL…GYYV), 569 to 591 (IVWL…IQYT), and 620 to 640 (LWID…MAYM).

Belongs to the ABC transporter superfamily. ABCG family. Eye pigment precursor importer (TC 3.A.1.204) subfamily. Forms heterodimers with ABCG11. As to expression, accumulates primarily in the pericycle and stelar cells of roots. Expressed in leaves, stems, flowers and siliques, and, at low levels, in roots. Accumulates in the phloem.

It localises to the cell membrane. Positive regulator of plant growth which acts as an efflux pump involved in the major root-to-shoot (acropetal) long-distance cytokinin (CK) transport via the xylem sap. Together with ABCG9 and ABCG11, required for vascular development by regulating lipid/sterol homeostasis. Involved in CK-dependent responses to oxidative stress such as hydrogen peroxide H(2)O(2). In terms of biological role, (Microbial infection) Required for SNC1-mediated defense response against the virulent pathogen Pseudomonas syringae pv. tomato DC3000 by promoting the accumulation of trans-zeatin (tZ)-type cytokinins (CK) in the shoot. This chain is ABC transporter G family member 14, found in Arabidopsis thaliana (Mouse-ear cress).